The sequence spans 234 residues: LexA repressor (234 aa).

Residues 26–46 constitute a DNA-binding region (H-T-H motif); the sequence is FEEMKEALDLKSKSGVHRLIS. Residues 73-100 are disordered; the sequence is AVGKAAPVSQREAANTNSALPPLRAAPK. Residues 91–100 are compositionally biased toward low complexity; it reads ALPPLRAAPK. Residues Ser-154 and Lys-192 each act as for autocatalytic cleavage activity in the active site.

This sequence belongs to the peptidase S24 family. In terms of assembly, homodimer.

It catalyses the reaction Hydrolysis of Ala-|-Gly bond in repressor LexA.. Its function is as follows. Represses a number of genes involved in the response to DNA damage (SOS response), including recA and lexA. In the presence of single-stranded DNA, RecA interacts with LexA causing an autocatalytic cleavage which disrupts the DNA-binding part of LexA, leading to derepression of the SOS regulon and eventually DNA repair. This chain is LexA repressor, found in Novosphingobium aromaticivorans (strain ATCC 700278 / DSM 12444 / CCUG 56034 / CIP 105152 / NBRC 16084 / F199).